A 370-amino-acid chain; its full sequence is tRNA-specific 2-thiouridylase MnmA (370 aa).

ATP contacts are provided by residues 11–18 and methionine 37; that span reads GMSGGVDS. Residues 97 to 99 are interaction with target base in tRNA; that stretch reads NPD. Cysteine 102 serves as the catalytic Nucleophile. Cysteine 102 and cysteine 199 are oxidised to a cystine. ATP is bound at residue glycine 126. An interaction with tRNA region spans residues 149-151; that stretch reads KDQ. Cysteine 199 functions as the Cysteine persulfide intermediate in the catalytic mechanism. The interval 307–308 is interaction with tRNA; that stretch reads RY.

Belongs to the MnmA/TRMU family.

Its subcellular location is the cytoplasm. The catalysed reaction is S-sulfanyl-L-cysteinyl-[protein] + uridine(34) in tRNA + AH2 + ATP = 2-thiouridine(34) in tRNA + L-cysteinyl-[protein] + A + AMP + diphosphate + H(+). Catalyzes the 2-thiolation of uridine at the wobble position (U34) of tRNA, leading to the formation of s(2)U34. This Staphylococcus haemolyticus (strain JCSC1435) protein is tRNA-specific 2-thiouridylase MnmA.